Here is a 3094-residue protein sequence, read N- to C-terminus: Replicase polyprotein 1ab (3094 aa).

Active-site for leader protease activity residues include Cys509 and His569. Positions 622–647 (ARSVEKDLIDFKDEIKSLSKEKRSVT) form a coiled coil. Residues 670-857 (SFTHSVYSDH…HKLSNIKSIM (188 aa)) form the Alphavirus-like MT domain. Positions 1807–1816 (DSESVSSDEV) are enriched in low complexity. The segment at 1807 to 1828 (DSESVSSDEVASNPRPGLHGGS) is disordered. In terms of domain architecture, (+)RNA virus helicase ATP-binding spans 2215–2387 (TQTNFVSANA…FVDDESRVYG (173 aa)). The (+)RNA virus helicase C-terminal domain maps to 2388–2548 (EVSYRCPWDV…AYRVYPTSFG (161 aa)). In terms of domain architecture, RdRp catalytic spans 2817-2930 (YNVGEIDFSK…FSESPIRNSA (114 aa)).

The leader protease is released by autoproteolysis.

Its subcellular location is the host cytoplasmic vesicle membrane. The catalysed reaction is RNA(n) + a ribonucleoside 5'-triphosphate = RNA(n+1) + diphosphate. It carries out the reaction ATP + H2O = ADP + phosphate + H(+). In terms of biological role, L-pro is involved in systemic transport and in RNA amplification. RNA-dependent RNA polymerase replicates the viral genome. The protein is Replicase polyprotein 1ab of Beet yellows virus (isolate Ukraine) (BYV).